Reading from the N-terminus, the 288-residue chain is Small ribosomal subunit biogenesis GTPase RsgA (288 aa).

The 158-residue stretch at 61–218 (TNKLIRPPVS…IVDTPGFSSL (158 aa)) folds into the CP-type G domain. GTP-binding positions include 110–113 (NKID) and 161–169 (GPSGVGKST). C242, C247, H249, and C255 together coordinate Zn(2+).

The protein belongs to the TRAFAC class YlqF/YawG GTPase family. RsgA subfamily. Monomer. Associates with 30S ribosomal subunit, binds 16S rRNA. It depends on Zn(2+) as a cofactor.

The protein resides in the cytoplasm. Functionally, one of several proteins that assist in the late maturation steps of the functional core of the 30S ribosomal subunit. Helps release RbfA from mature subunits. May play a role in the assembly of ribosomal proteins into the subunit. Circularly permuted GTPase that catalyzes slow GTP hydrolysis, GTPase activity is stimulated by the 30S ribosomal subunit. This chain is Small ribosomal subunit biogenesis GTPase RsgA, found in Clostridium acetobutylicum (strain ATCC 824 / DSM 792 / JCM 1419 / IAM 19013 / LMG 5710 / NBRC 13948 / NRRL B-527 / VKM B-1787 / 2291 / W).